A 904-amino-acid polypeptide reads, in one-letter code: E3 ubiquitin-protein ligase ZNF598 (904 aa).

The RING-type zinc-finger motif lies at 29-69 (CVLCCGDLEATALGRCDHPVCYRCSTKMRVLCEQRYCAVCR). The segment at 187–210 (PLCKFCDERYLDNDELLKHLRRDH) adopts a C2H2-type zinc-finger fold. Position 306 is a phosphotyrosine (tyrosine 306). 2 disordered regions span residues 312 to 469 (YSRQ…GLAL) and 490 to 656 (VSSV…LPRP). Over residues 346–358 (AAAVRASVAAQQQ) the composition is skewed to low complexity. A compositionally biased stretch (basic and acidic residues) spans 359–388 (EEARRSEDQEEGGRPKKEEAAARGPEDPRG). Residues 404–416 (ETSTNGPVSQEAF) show a composition bias toward polar residues. A compositionally biased stretch (low complexity) spans 418–431 (VTGPAAPGCVGVPG). Glycine 428, glycine 431, and serine 437 each carry phosphoserine. Low complexity-rich tracts occupy residues 447–461 (SLSA…TAAT) and 502–513 (SLVSAWNSSSSS). Positions 521 to 531 (LSAQATGSGQP) are enriched in polar residues. Residues 534 to 543 (KAGKGSRGGR) show a composition bias toward basic residues. Residues 564–584 (LLSTRPTGSVSSTLGLASIQP) show a composition bias toward polar residues.

It belongs to the ZNF598/HEL2 family. In terms of assembly, interacts with the E2 ubiquitin-conjugating enzyme UBE2D3. Component of the 4EHP-GYF2 complex, at least composed of EIF4E2, GIGYF2 and ZNF598.

The protein resides in the cytoplasm. Its subcellular location is the cytosol. The enzyme catalyses S-ubiquitinyl-[E2 ubiquitin-conjugating enzyme]-L-cysteine + [acceptor protein]-L-lysine = [E2 ubiquitin-conjugating enzyme]-L-cysteine + N(6)-ubiquitinyl-[acceptor protein]-L-lysine.. It functions in the pathway protein modification; protein ubiquitination. E3 ubiquitin-protein ligase that plays a key role in the ribosome quality control (RQC), a pathway that takes place when a ribosome has stalled during translation, leading to degradation of nascent peptide chains. ZNF598 is activated when ribosomes are stalled within an mRNA following translation of prematurely polyadenylated mRNAs. Acts as a ribosome collision sensor: specifically recognizes and binds collided di-ribosome, which arises when a trailing ribosome encounters a slower leading ribosome, leading to terminally arrest translation. Following binding to colliding ribosomes, mediates monoubiquitination of 40S ribosomal proteins RPS10/eS10 and RPS3/uS3, and 'Lys-63'-linked polyubiquitination of RPS20/uS10. Polyubiquitination of RPS20/uS10 promotes recruitment of the RQT (ribosome quality control trigger) complex, which drives the disassembly of stalled ribosomes, followed by degradation of nascent peptides. E3 ubiquitin-protein ligase activity is dependent on the E2 ubiquitin-conjugating enzyme UBE2D3. Also acts as an adapter that recruits the 4EHP-GYF2 complex to mRNAs. Independently of its role in RQC, may also act as a negative regulator of interferon-stimulated gene (ISG) expression. In terms of biological role, (Microbial infection) Required for poxvirus protein synthesis by mediating ubiquitination of RPS10/eS10 and RPS20/uS10. Poxvirus encoding mRNAs contain unusual 5' poly(A) leaders and ZNF598 is required for their translational efficiency, possibly via its ability to suppress readthrough or sliding on shorter poly(A) tracts. The sequence is that of E3 ubiquitin-protein ligase ZNF598 from Homo sapiens (Human).